We begin with the raw amino-acid sequence, 481 residues long: Wax ester synthase/diacylglycerol acyltransferase 1 (481 aa).

Topologically, residues 1-185 are cytoplasmic; it reads MKAEKVMERE…TTATKKPADS (185 aa). H147 functions as the Proton acceptor in the catalytic mechanism. The chain crosses the membrane as a helical span at residues 186–206; it reads MAWWLFVGFWFMIRVTFTTIV. The Lumenal segment spans residues 207–481; it reads EFSKLMLTVC…QGEIFHKTEV (275 aa).

This sequence in the N-terminal section; belongs to the long-chain O-acyltransferase family. Expressed in flowers, siliques, top parts of stems, and leaves. Not found in roots, seeds and young seedlings.

Its subcellular location is the cell membrane. The protein resides in the endoplasmic reticulum membrane. It catalyses the reaction a long chain fatty alcohol + a fatty acyl-CoA = a wax ester + CoA. The catalysed reaction is an acyl-CoA + a 1,2-diacyl-sn-glycerol = a triacyl-sn-glycerol + CoA. It participates in glycerolipid metabolism; triacylglycerol biosynthesis. The protein operates within lipid metabolism. In terms of biological role, bifunctional wax ester synthase/diacylglycerol acyltransferase. Involved in cuticular wax biosynthesis. Required to reduce leaf water loss, especially during drought. This chain is Wax ester synthase/diacylglycerol acyltransferase 1, found in Arabidopsis thaliana (Mouse-ear cress).